Here is a 107-residue protein sequence, read N- to C-terminus: Death-associated protein-like 1 (107 aa).

The interval methionine 1 to arginine 26 is disordered.

Detected in the corneal epithelium, and only in trace amounts in the liver, bladder, brain, heart, and stomach.

Its function is as follows. May play a role in the early stages of epithelial differentiation or in apoptosis. This Bos taurus (Bovine) protein is Death-associated protein-like 1 (DAPL1).